The following is a 213-amino-acid chain: Holliday junction branch migration complex subunit RuvA (213 aa).

The interval 1–63 is domain I; that stretch reads MISFLRGTVA…EDSMTLFGFA (63 aa). Positions 64–140 are domain II; the sequence is DDDEREVFEV…LVPHGTAPAA (77 aa). The tract at residues 140-144 is flexible linker; sequence AATTA. The segment at 145–213 is domain III; sequence AEASWKPQVV…RAGNRVGSRG (69 aa).

This sequence belongs to the RuvA family. As to quaternary structure, homotetramer. Forms an RuvA(8)-RuvB(12)-Holliday junction (HJ) complex. HJ DNA is sandwiched between 2 RuvA tetramers; dsDNA enters through RuvA and exits via RuvB. An RuvB hexamer assembles on each DNA strand where it exits the tetramer. Each RuvB hexamer is contacted by two RuvA subunits (via domain III) on 2 adjacent RuvB subunits; this complex drives branch migration. In the full resolvosome a probable DNA-RuvA(4)-RuvB(12)-RuvC(2) complex forms which resolves the HJ.

Its subcellular location is the cytoplasm. Functionally, the RuvA-RuvB-RuvC complex processes Holliday junction (HJ) DNA during genetic recombination and DNA repair, while the RuvA-RuvB complex plays an important role in the rescue of blocked DNA replication forks via replication fork reversal (RFR). RuvA specifically binds to HJ cruciform DNA, conferring on it an open structure. The RuvB hexamer acts as an ATP-dependent pump, pulling dsDNA into and through the RuvAB complex. HJ branch migration allows RuvC to scan DNA until it finds its consensus sequence, where it cleaves and resolves the cruciform DNA. The protein is Holliday junction branch migration complex subunit RuvA of Pseudarthrobacter chlorophenolicus (strain ATCC 700700 / DSM 12829 / CIP 107037 / JCM 12360 / KCTC 9906 / NCIMB 13794 / A6) (Arthrobacter chlorophenolicus).